Here is a 252-residue protein sequence, read N- to C-terminus: Two-component response regulator ORR2 (252 aa).

Positions arginine 7 to glycine 157 constitute a Response regulatory domain. Position 90 is a 4-aspartylphosphate (aspartate 90).

It belongs to the ARR family. Type-A subfamily. Post-translationally, two-component system major event consists of a His-to-Asp phosphorelay between a sensor histidine kinase (HK) and a response regulator (RR). In plants, the His-to-Asp phosphorelay involves an additional intermediate named Histidine-containing phosphotransfer protein (HPt). This multistep phosphorelay consists of a His-Asp-His-Asp sequential transfer of a phosphate group between first a His and an Asp of the HK protein, followed by the transfer to a conserved His of the HPt protein and finally the transfer to an Asp in the receiver domain of the RR protein. As to expression, expressed in mature leaves and flowers, and at low levels in roots and shoots.

Functions as a response regulator involved in His-to-Asp phosphorelay signal transduction system. Phosphorylation of the Asp residue in the receiver domain activates the ability of the protein to promote the transcription of target genes. Type-A response regulators seem to act as negative regulators of the cytokinin signaling. The sequence is that of Two-component response regulator ORR2 from Oryza sativa subsp. indica (Rice).